Reading from the N-terminus, the 126-residue chain is MHHRKSGRHLNRTSAHRKAMLRNMAVSLFQHELIKTTLPKAKELRRVVEPLITLAKEDTVANRRLAFNRLRDDAIVAKLFKEIAPRHKERPGGYCRVLKYGFRNGDSAPMAIVELVDREESESSED.

The protein belongs to the bacterial ribosomal protein bL17 family. Part of the 50S ribosomal subunit. Contacts protein L32.

This Coxiella burnetii (strain CbuG_Q212) (Coxiella burnetii (strain Q212)) protein is Large ribosomal subunit protein bL17.